Reading from the N-terminus, the 377-residue chain is Nitric oxide reductase FlRd-NAD(+) reductase (377 aa).

This sequence belongs to the FAD-dependent oxidoreductase family. It depends on FAD as a cofactor.

Its subcellular location is the cytoplasm. The enzyme catalyses 2 reduced [nitric oxide reductase rubredoxin domain] + NAD(+) + H(+) = 2 oxidized [nitric oxide reductase rubredoxin domain] + NADH. The protein operates within nitrogen metabolism; nitric oxide reduction. In terms of biological role, one of at least two accessory proteins for anaerobic nitric oxide (NO) reductase. Reduces the rubredoxin moiety of NO reductase. This is Nitric oxide reductase FlRd-NAD(+) reductase from Salmonella typhi.